A 142-amino-acid polypeptide reads, in one-letter code: Large ribosomal subunit protein bL17 (142 aa).

This sequence belongs to the bacterial ribosomal protein bL17 family. As to quaternary structure, part of the 50S ribosomal subunit. Contacts protein L32.

This is Large ribosomal subunit protein bL17 from Chlamydia felis (strain Fe/C-56) (Chlamydophila felis).